Here is a 472-residue protein sequence, read N- to C-terminus: Peptidoglycan endopeptidase RipA (472 aa).

Residues 1–39 (MRRNRRGSPARPAARFVRPAIPSALSVALLVCTPGLATA) constitute a signal peptide (tat-type signal). Residues 340–472 (RQASEYVIRR…TPYVVRYIEY (133 aa)) enclose the NlpC/P60 domain. The active-site Nucleophile is the Cys-383. Catalysis depends on His-432, which acts as the Proton acceptor. Residue Glu-444 is part of the active site.

This sequence belongs to the peptidase C40 family. Monomer. Interacts with RpfB and PBP1A (ponA1) via residues 448-472 of RipA, interacts with RpfE. Interacts with the chaperone MoxR1. RipA-MoxR1 interaction in the cytoplasm leads to proper folding of RipA, resulting in its secretion. Also interacts with Mce2B. In terms of processing, exported by the Tat system. The position of the signal peptide cleavage has not been experimentally proven.

The protein resides in the secreted. With respect to regulation, moxR1-mediated folding is critical for secretion via the TAT system. The synergistic effects on peptidoglycan degradation of RipA plus RpfB are inhibited by addition of PBP1A (ponA1). Peptidoglycan endopeptidase that cleaves the bond between D-glutamate and meso-diaminopimelate. Binds and degrades high-molecular weight peptidoglycan from a number of Actinobacteria; activity is increased in the presence of RpfB and inhibited by PBP1A (ponA1). Required for normal separation of daughter cells after cell division and for cell wall integrity. Required for host cell invasion and intracellular survival in host macrophages. The protein is Peptidoglycan endopeptidase RipA (ripA) of Mycobacterium tuberculosis (strain ATCC 25618 / H37Rv).